The sequence spans 293 residues: GPN-loop GTPase 3 (293 aa).

13-18 (GAGKST) contributes to the GTP binding site. A Gly-Pro-Asn (GPN)-loop; involved in dimer interface motif is present at residues 70 to 72 (GPN). 176 to 179 (SKMD) contacts GTP. The segment covering 272–281 (HEAQEPREPN) has biased composition (basic and acidic residues). The segment at 272–293 (HEAQEPREPNDEQDVDYEDADI) is disordered. Residues 282-293 (DEQDVDYEDADI) are compositionally biased toward acidic residues.

Belongs to the GPN-loop GTPase family. Heterodimers with gpn1 or gpn2. Binds to RNA polymerase II (RNAPII).

Its function is as follows. Small GTPase required for proper nuclear import of RNA polymerase II and III (RNAPII and RNAPIII). May act at an RNAP assembly step prior to nuclear import. The chain is GPN-loop GTPase 3 from Aspergillus fumigatus (strain ATCC MYA-4609 / CBS 101355 / FGSC A1100 / Af293) (Neosartorya fumigata).